Consider the following 350-residue polypeptide: MGAGASAEEKHSRELEKKLKEDAEKDARTVKLLLLGAGESGKSTIVKQMKIIHQDGYSLEECLEFIAIIYGNTLQSILAIVRAMTTLNIQYGDSARQDDARKLMHMADTIEEGTMPKEMSDIIQRLWKDSGIQACFDRASEYQLNDSAGYYLSDLERLVTPGYVPTEQDVLRSRVKTTGIIETQFSFKDLNFRMFDVGGQRSERKKWIHCFEGVTCIIFIAALSAYDMVLVEDDEVNRMHESLHLFNSICNHRYFATTSIVLFLNKKDVFSEKIKKAHLSICFPDYDGPNTYEDAGNYIKVQFLELNMRRDVKEIYSHMTCATDTQNVKFVFDAVTDIIIKENLKDCGLF.

Residues 1 to 21 are disordered; sequence MGAGASAEEKHSRELEKKLKE. Residue Gly-2 is the site of N-myristoyl glycine attachment. Positions 7 to 21 are enriched in basic and acidic residues; it reads AEEKHSRELEKKLKE. Residues 28 to 350 form the G-alpha domain; that stretch reads RTVKLLLLGA…KENLKDCGLF (323 aa). Positions 31–44 are G1 motif; sequence KLLLLGAGESGKST. 36–43 is a GTP binding site; it reads GAGESGKS. Mg(2+) is bound at residue Ser-43. Position 142 is a phosphotyrosine (Tyr-142). GTP is bound by residues Asp-146, 171 to 177, Gly-199, 265 to 268, and Ala-322; these read LRSRVKT and NKKD. A G2 motif region spans residues 169–177; that stretch reads DVLRSRVKT. Position 177 (Thr-177) interacts with Mg(2+). The G3 motif stretch occupies residues 192 to 201; that stretch reads FRMFDVGGQR. The G4 motif stretch occupies residues 261 to 268; that stretch reads VLFLNKKD. Residues 320–325 form a G5 motif region; sequence TCATDT. The interaction with RHO stretch occupies residues 340–350; it reads IKENLKDCGLF.

This sequence belongs to the G-alpha family. G(i/o/t/z) subfamily. In terms of assembly, heterotrimeric G proteins are composed of 3 subunits alpha, beta and gamma. The alpha chain contains the guanine nucleotide binding site. Interacts with RHO. Interacts with RGS9 and PDE6G. Interacts (when myristoylated) with UNC119; interaction is required for localization in sensory neurons. In terms of tissue distribution, in the retina, expressed in the rod photoreceptors.

Its subcellular location is the cell projection. The protein resides in the cilium. It localises to the photoreceptor outer segment. It is found in the membrane. The protein localises to the photoreceptor inner segment. Functions as a signal transducer for the rod photoreceptor RHO. Required for normal RHO-mediated light perception by the retina. Guanine nucleotide-binding proteins (G proteins) function as transducers downstream of G protein-coupled receptors (GPCRs), such as the photoreceptor RHO. The alpha chain contains the guanine nucleotide binding site and alternates between an active, GTP-bound state and an inactive, GDP-bound state. Activated RHO promotes GDP release and GTP binding. Signaling is mediated via downstream effector proteins, such as cGMP-phosphodiesterase. The polypeptide is Guanine nucleotide-binding protein G(t) subunit alpha-1 (Gnat1) (Mus musculus (Mouse)).